The sequence spans 314 residues: Lipoyl synthase (314 aa).

Residues Cys-61, Cys-66, Cys-72, Cys-87, Cys-91, Cys-94, and Ser-301 each coordinate [4Fe-4S] cluster. The region spanning 73–290 (FGRGTATFMI…ERIATNLGFS (218 aa)) is the Radical SAM core domain.

It belongs to the radical SAM superfamily. Lipoyl synthase family. The cofactor is [4Fe-4S] cluster.

The protein localises to the cytoplasm. It catalyses the reaction [[Fe-S] cluster scaffold protein carrying a second [4Fe-4S](2+) cluster] + N(6)-octanoyl-L-lysyl-[protein] + 2 oxidized [2Fe-2S]-[ferredoxin] + 2 S-adenosyl-L-methionine + 4 H(+) = [[Fe-S] cluster scaffold protein] + N(6)-[(R)-dihydrolipoyl]-L-lysyl-[protein] + 4 Fe(3+) + 2 hydrogen sulfide + 2 5'-deoxyadenosine + 2 L-methionine + 2 reduced [2Fe-2S]-[ferredoxin]. The protein operates within protein modification; protein lipoylation via endogenous pathway; protein N(6)-(lipoyl)lysine from octanoyl-[acyl-carrier-protein]: step 2/2. Functionally, catalyzes the radical-mediated insertion of two sulfur atoms into the C-6 and C-8 positions of the octanoyl moiety bound to the lipoyl domains of lipoate-dependent enzymes, thereby converting the octanoylated domains into lipoylated derivatives. This chain is Lipoyl synthase, found in Nitrosomonas eutropha (strain DSM 101675 / C91 / Nm57).